We begin with the raw amino-acid sequence, 67 residues long: Small ribosomal subunit protein bS21 (67 aa).

This sequence belongs to the bacterial ribosomal protein bS21 family.

This Paramagnetospirillum magneticum (strain ATCC 700264 / AMB-1) (Magnetospirillum magneticum) protein is Small ribosomal subunit protein bS21.